The sequence spans 384 residues: Carbamoyl phosphate synthase small chain (384 aa).

The segment at 1 to 192 is CPSase; sequence MMKRIPAILV…LTDNIRVHRV (192 aa). Positions 51, 244, and 246 each coordinate L-glutamine. A Glutamine amidotransferase type-1 domain is found at 196–382; that stretch reads KVIVIDFGVK…IEIMTKSKNK (187 aa). Catalysis depends on cysteine 272, which acts as the Nucleophile. Residues methionine 273, glutamine 276, asparagine 312, glycine 314, and phenylalanine 315 each coordinate L-glutamine. Catalysis depends on residues histidine 355 and glutamate 357.

This sequence belongs to the CarA family. In terms of assembly, composed of two chains; the small (or glutamine) chain promotes the hydrolysis of glutamine to ammonia, which is used by the large (or ammonia) chain to synthesize carbamoyl phosphate. Tetramer of heterodimers (alpha,beta)4.

It is found in the plastid. The protein localises to the chloroplast. The enzyme catalyses hydrogencarbonate + L-glutamine + 2 ATP + H2O = carbamoyl phosphate + L-glutamate + 2 ADP + phosphate + 2 H(+). The catalysed reaction is L-glutamine + H2O = L-glutamate + NH4(+). The protein operates within amino-acid biosynthesis; L-arginine biosynthesis; carbamoyl phosphate from bicarbonate: step 1/1. It functions in the pathway pyrimidine metabolism; UMP biosynthesis via de novo pathway; (S)-dihydroorotate from bicarbonate: step 1/3. Functionally, small subunit of the glutamine-dependent carbamoyl phosphate synthetase (CPSase). CPSase catalyzes the formation of carbamoyl phosphate from the ammonia moiety of glutamine, carbonate, and phosphate donated by ATP, constituting the first step of 2 biosynthetic pathways, one leading to arginine and/or urea and the other to pyrimidine nucleotides. The small subunit (glutamine amidotransferase) binds and cleaves glutamine to supply the large subunit with the substrate ammonia. The sequence is that of Carbamoyl phosphate synthase small chain from Pyropia yezoensis (Susabi-nori).